The following is a 33-amino-acid chain: Photosystem II reaction center protein Psb30 (33 aa).

Residues 5–25 (VIAQLIALALIVGSGPLVIAL) form a helical membrane-spanning segment.

The protein belongs to the Psb30/Ycf12 family. PSII is composed of 1 copy each of membrane proteins PsbA, PsbB, PsbC, PsbD, PsbE, PsbF, PsbH, PsbI, PsbJ, PsbK, PsbL, PsbM, PsbT, PsbX, PsbY, PsbZ, Psb30/Ycf12, peripheral proteins of the oxygen-evolving complex and a large number of cofactors. It forms dimeric complexes.

The protein localises to the plastid. It is found in the chloroplast thylakoid membrane. A core subunit of photosystem II (PSII), probably helps stabilize the reaction center. This Physcomitrium patens (Spreading-leaved earth moss) protein is Photosystem II reaction center protein Psb30.